The sequence spans 205 residues: CASP-like protein 3A1 (205 aa).

Over Met1 to Asp39 the chain is Cytoplasmic. The chain crosses the membrane as a helical span at residues Leu40 to Met60. Residues Ala61–Glu89 are Extracellular-facing. A helical transmembrane segment spans residues Phe90–Gly110. Residues Met111–His125 lie on the Cytoplasmic side of the membrane. Residues Ala126–Ala146 traverse the membrane as a helical segment. Residues Ala147–Lys176 lie on the Extracellular side of the membrane. A glycan (N-linked (GlcNAc...) asparagine) is linked at Asn154. Residues Ala177–Leu197 form a helical membrane-spanning segment. The Cytoplasmic portion of the chain corresponds to Asp198 to Asn205.

The protein belongs to the Casparian strip membrane proteins (CASP) family. In terms of assembly, homodimer and heterodimers.

The protein localises to the cell membrane. This Picea sitchensis (Sitka spruce) protein is CASP-like protein 3A1.